We begin with the raw amino-acid sequence, 469 residues long: Glutamate--tRNA ligase (469 aa).

The short motif at 9–19 is the 'HIGH' region element; it reads PSPTGMFHVGG. 4 residues coordinate Zn(2+): Cys-100, Cys-102, Cys-122, and Asp-124. The 'KMSKS' region signature appears at 232-236; it reads KLSKR. Lys-235 is a binding site for ATP.

The protein belongs to the class-I aminoacyl-tRNA synthetase family. Glutamate--tRNA ligase type 1 subfamily. As to quaternary structure, monomer. Zn(2+) serves as cofactor.

It localises to the cytoplasm. The enzyme catalyses tRNA(Glu) + L-glutamate + ATP = L-glutamyl-tRNA(Glu) + AMP + diphosphate. In terms of biological role, catalyzes the attachment of glutamate to tRNA(Glu) in a two-step reaction: glutamate is first activated by ATP to form Glu-AMP and then transferred to the acceptor end of tRNA(Glu). The sequence is that of Glutamate--tRNA ligase from Salinispora arenicola (strain CNS-205).